We begin with the raw amino-acid sequence, 373 residues long: MSDNSKTRVVVGMSGGVDSSVTALLLKEQGYDVIGIFMKNWDDTDENGVCTATEDYKDVVAVADQIGIPYYSVNFEKEYWDRVFEYFLAEYRAGRTPNPDVMCNKEIKFKAFLDYAMTLGADYVATGHYARVVRDEDGTVHMLRGVDNGKDQTYFLSQLSQEQLQKTMFPLGHLEKPEVRKLAEEAGLSTAKKKDSTGICFIGEKNFKNFLSNYLPAQPGRMMTVDGRDMGEHAGLMYYTIGQRGGLGIGGQHGGDNAPWFVVGKDLSKNILYVGQGFYHDSLMSTSLEASQVHFTREMPEEFTLECTAKFRYRQPDSKVTVHVKGDKAEVIFTEPQRAITPGQAVVFYDGEECLGGGLIDNAYRDGQVCQYI.

Residues 12 to 19 and methionine 38 each bind ATP; that span reads GMSGGVDS. The interaction with target base in tRNA stretch occupies residues 98 to 100; that stretch reads NPD. Cysteine 103 acts as the Nucleophile in catalysis. A disulfide bridge connects residues cysteine 103 and cysteine 200. Position 127 (glycine 127) interacts with ATP. Residues 150 to 152 form an interaction with tRNA region; that stretch reads KDQ. Catalysis depends on cysteine 200, which acts as the Cysteine persulfide intermediate. The interaction with tRNA stretch occupies residues 312-313; the sequence is RY.

Belongs to the MnmA/TRMU family.

The protein resides in the cytoplasm. It catalyses the reaction S-sulfanyl-L-cysteinyl-[protein] + uridine(34) in tRNA + AH2 + ATP = 2-thiouridine(34) in tRNA + L-cysteinyl-[protein] + A + AMP + diphosphate + H(+). In terms of biological role, catalyzes the 2-thiolation of uridine at the wobble position (U34) of tRNA, leading to the formation of s(2)U34. The sequence is that of tRNA-specific 2-thiouridylase MnmA from Streptococcus pneumoniae (strain CGSP14).